A 483-amino-acid polypeptide reads, in one-letter code: Isocitrate dehydrogenase [NADP] (483 aa).

Thr74 is an NADP(+) binding site. D-threo-isocitrate-binding residues include Ser83, Asn85, Arg89, Arg99, and Arg121. Asp232 lines the Mg(2+) pocket. NADP(+)-binding positions include His264 to Ile270 and Asn277.

Belongs to the isocitrate and isopropylmalate dehydrogenases family. In terms of assembly, homodimer. The cofactor is Mg(2+). Requires Mn(2+) as cofactor.

The enzyme catalyses D-threo-isocitrate + NADP(+) = 2-oxoglutarate + CO2 + NADPH. In terms of biological role, catalyzes the oxidative decarboxylation of isocitrate to 2-oxoglutarate and carbon dioxide with the concomitant reduction of NADP(+). The chain is Isocitrate dehydrogenase [NADP] (icd) from Rickettsia felis (strain ATCC VR-1525 / URRWXCal2) (Rickettsia azadi).